Consider the following 181-residue polypeptide: Ribonuclease HII (181 aa).

Residues 1-181 (MICGIDEVGR…SLHRKNFKLI (181 aa)) form the RNase H type-2 domain. Asp6, Glu7, and Asp98 together coordinate a divalent metal cation.

Belongs to the RNase HII family. It depends on Mn(2+) as a cofactor. The cofactor is Mg(2+).

Its subcellular location is the cytoplasm. It carries out the reaction Endonucleolytic cleavage to 5'-phosphomonoester.. In terms of biological role, endonuclease that specifically degrades the RNA of RNA-DNA hybrids. This chain is Ribonuclease HII, found in Borreliella afzelii (strain PKo) (Borrelia afzelii).